A 205-amino-acid polypeptide reads, in one-letter code: NADH-quinone oxidoreductase subunit J (205 aa).

Transmembrane regions (helical) follow at residues 1–21, 26–46, 54–74, 89–109, and 142–162; these read MPIF…CVVL, VYSV…MILL, LLIV…IMML, LSLS…TIIL, and FMLP…SCIT.

Belongs to the complex I subunit 6 family.

It is found in the cell membrane. It carries out the reaction a quinone + NADH + 5 H(+)(in) = a quinol + NAD(+) + 4 H(+)(out). Its function is as follows. NDH-1 shuttles electrons from NADH, via FMN and iron-sulfur (Fe-S) centers, to quinones in the respiratory chain. Couples the redox reaction to proton translocation (for every two electrons transferred, four hydrogen ions are translocated across the cytoplasmic membrane), and thus conserves the redox energy in a proton gradient. The polypeptide is NADH-quinone oxidoreductase subunit J (nuoJ) (Rickettsia prowazekii (strain Madrid E)).